Reading from the N-terminus, the 86-residue chain is Small ribosomal subunit protein bS16 (86 aa).

Belongs to the bacterial ribosomal protein bS16 family.

The chain is Small ribosomal subunit protein bS16 from Trichormus variabilis (strain ATCC 29413 / PCC 7937) (Anabaena variabilis).